The chain runs to 122 residues: Large ribosomal subunit protein uL14 (122 aa).

It belongs to the universal ribosomal protein uL14 family. Part of the 50S ribosomal subunit. Forms a cluster with proteins L3 and L19. In the 70S ribosome, L14 and L19 interact and together make contacts with the 16S rRNA in bridges B5 and B8.

Its function is as follows. Binds to 23S rRNA. Forms part of two intersubunit bridges in the 70S ribosome. The sequence is that of Large ribosomal subunit protein uL14 from Prosthecochloris aestuarii (strain DSM 271 / SK 413).